A 140-amino-acid chain; its full sequence is Large ribosomal subunit protein uL11 (140 aa).

This sequence belongs to the universal ribosomal protein uL11 family. Part of the ribosomal stalk of the 50S ribosomal subunit. Interacts with L10 and the large rRNA to form the base of the stalk. L10 forms an elongated spine to which L12 dimers bind in a sequential fashion forming a multimeric L10(L12)X complex. One or more lysine residues are methylated.

Functionally, forms part of the ribosomal stalk which helps the ribosome interact with GTP-bound translation factors. In Desulfatibacillum aliphaticivorans, this protein is Large ribosomal subunit protein uL11.